The chain runs to 157 residues: Nicotinate dehydrogenase small FeS subunit (157 aa).

The region spanning 4-80 (ITINLNLNGE…ESTIITLEGV (77 aa)) is the 2Fe-2S ferredoxin-type domain. Residues Cys-42, Cys-47, Cys-50, Cys-62, Cys-101, Cys-104, Cys-136, and Cys-138 each coordinate [2Fe-2S] cluster.

As to quaternary structure, heterooctamer of NDHM, NDHL, NDHS and NDHF. Dimer of heterotetramers. Requires [2Fe-2S] cluster as cofactor.

It catalyses the reaction nicotinate + NADP(+) + H2O = 6-hydroxynicotinate + NADPH + H(+). It participates in cofactor degradation; nicotinate degradation; 6-hydroxynicotinate from nicotinate: step 1/1. Its activity is regulated as follows. Reversibly inactivated by selenide and sulfide. Not inhibited by cyanide. In terms of biological role, catalyzes the hydroxylation of nicotinate to 6-hydroxynicotinate. Also active against 2-pyrazinecarboxylic acid, but inactive against other nicotinate analogs. The chain is Nicotinate dehydrogenase small FeS subunit (ndhS) from Eubacterium barkeri (Clostridium barkeri).